The chain runs to 89 residues: Sugar transporter SemiSWEET (89 aa).

Helical transmembrane passes span 4 to 27, 35 to 55, and 60 to 82; these read ILLT…IKTI, ISVV…AYGI, and FAVL…ITLI. One can recognise a PQ-loop domain in the interval 7-59; the sequence is TGLFAAFFTTFAFAPQSIKTIRTRNTEGISVVMYIMFLTGVISWIAYGIMRSD.

As to quaternary structure, homodimer.

It is found in the cell membrane. The homodimer mediates transmembrane sugar transport down a concentration gradient. Transport is probably effected by rocking-type movements, where a cargo-binding cavity opens first on one and then on the other side of the membrane. This chain is Sugar transporter SemiSWEET, found in Escherichia coli (strain UMEA 3162-1).